Reading from the N-terminus, the 147-residue chain is Myoglobin (147 aa).

The Globin domain maps to 2–141 (ADFDMVLKCW…IITDMEADYK (140 aa)). His60 serves as a coordination point for nitrite. Residue His60 coordinates O2. Residue His89 participates in heme b binding.

Belongs to the globin family. As to quaternary structure, monomeric.

It localises to the cytoplasm. Its subcellular location is the sarcoplasm. The catalysed reaction is Fe(III)-heme b-[protein] + nitric oxide + H2O = Fe(II)-heme b-[protein] + nitrite + 2 H(+). It catalyses the reaction H2O2 + AH2 = A + 2 H2O. Functionally, monomeric heme protein which primary function is to store oxygen and facilitate its diffusion within muscle tissues. Reversibly binds oxygen through a pentacoordinated heme iron and enables its timely and efficient release as needed during periods of heightened demand. Depending on the oxidative conditions of tissues and cells, and in addition to its ability to bind oxygen, it also has a nitrite reductase activity whereby it regulates the production of bioactive nitric oxide. Under stress conditions, like hypoxia and anoxia, it also protects cells against reactive oxygen species thanks to its pseudoperoxidase activity. The protein is Myoglobin (mb) of Channichthys rhinoceratus (Unicorn icefish).